The chain runs to 582 residues: External alternative NAD(P)H-ubiquinone oxidoreductase B2, mitochondrial (582 aa).

A mitochondrion-targeting transit peptide spans Met1 to Ser38. Lys60–Arg90 is an FAD binding site. Leu223 to Ser259 contributes to the NAD(+) binding site. The EF-hand domain maps to Lys379 to Arg414. Residues Asp392, Asp394, Ser396, Thr398, and Glu403 each contribute to the Ca(2+) site. Residues Phe573–Ile582 carry the Microbody targeting signal motif.

The protein belongs to the NADH dehydrogenase family. It depends on FAD as a cofactor. Mostly expressed in seedlings and roots and, to a lower extent, in cotyledons, leaves, stems, buds and flowers.

It localises to the mitochondrion inner membrane. Its subcellular location is the peroxisome. The catalysed reaction is a quinone + NADH + H(+) = a quinol + NAD(+). It catalyses the reaction a ubiquinone + NADH + H(+) = a ubiquinol + NAD(+). NADPH oxidase activity is stimulated by calcium ions. Functionally, alternative NADH-ubiquinone oxidoreductase which catalyzes the oxidation of mitochondrial NADH does not translocate protons across the inner mitochondrial membrane. Calcium-dependent NAD(P)H dehydrogenase; more efficient on NADH. Binds calcium ions. This chain is External alternative NAD(P)H-ubiquinone oxidoreductase B2, mitochondrial (NDB2), found in Arabidopsis thaliana (Mouse-ear cress).